The primary structure comprises 244 residues: Phosphoadenosine 5'-phosphosulfate reductase (244 aa).

Cys239 acts as the Nucleophile; cysteine thiosulfonate intermediate in catalysis.

This sequence belongs to the PAPS reductase family. CysH subfamily.

The protein resides in the cytoplasm. The enzyme catalyses [thioredoxin]-disulfide + sulfite + adenosine 3',5'-bisphosphate + 2 H(+) = [thioredoxin]-dithiol + 3'-phosphoadenylyl sulfate. Its pathway is sulfur metabolism; hydrogen sulfide biosynthesis; sulfite from sulfate: step 3/3. Catalyzes the formation of sulfite from phosphoadenosine 5'-phosphosulfate (PAPS) using thioredoxin as an electron donor. The protein is Phosphoadenosine 5'-phosphosulfate reductase of Shigella flexneri serotype 5b (strain 8401).